A 1237-amino-acid chain; its full sequence is U3 small nucleolar RNA-associated protein 22 (1237 aa).

The disordered stretch occupies residues 1-78; the sequence is MATSVKRKAS…TNTAATRHNG (78 aa). Phosphoserine is present on residues Ser10 and Ser58. Thr60 is modified (phosphothreonine). Over residues 61 to 78 the composition is skewed to polar residues; the sequence is SPESNEVATNTAATRHNG. The residue at position 64 (Ser64) is a Phosphoserine.

The protein belongs to the NRAP family. Interacts with snoRNA U3. Interacts with MPP10. Component of the ribosomal small subunit (SSU) processome composed of at least 40 protein subunits and snoRNA U3. Interacts with UBP10.

The protein localises to the nucleus. It is found in the nucleolus. Involved in nucleolar processing of pre-18S ribosomal RNA and ribosome assembly. In Saccharomyces cerevisiae (strain ATCC 204508 / S288c) (Baker's yeast), this protein is U3 small nucleolar RNA-associated protein 22 (UTP22).